A 182-amino-acid chain; its full sequence is Riboflavin kinase (182 aa).

Residues Thr-39 and Asn-41 each contribute to the Mg(2+) site. Glu-117 serves as the catalytic Nucleophile.

This sequence belongs to the flavokinase family. Zn(2+) is required as a cofactor. Requires Mg(2+) as cofactor.

It carries out the reaction riboflavin + ATP = FMN + ADP + H(+). The protein operates within cofactor biosynthesis; FMN biosynthesis; FMN from riboflavin (ATP route): step 1/1. Its function is as follows. Catalyzes the phosphorylation of riboflavin (vitamin B2) to form flavin mononucleotide (FMN) coenzyme. In Lodderomyces elongisporus (strain ATCC 11503 / CBS 2605 / JCM 1781 / NBRC 1676 / NRRL YB-4239) (Yeast), this protein is Riboflavin kinase (FMN1).